The sequence spans 381 residues: Dual specificity protein phosphatase 6 (381 aa).

The Rhodanese domain maps to glycine 30–glutamate 148. The disordered stretch occupies residues serine 176–glutamine 203. Polar residues predominate over residues asparagine 189–glutamine 203. In terms of domain architecture, Tyrosine-protein phosphatase spans phenylalanine 206–leucine 349. Catalysis depends on cysteine 293, which acts as the Phosphocysteine intermediate.

This sequence belongs to the protein-tyrosine phosphatase family. Non-receptor class dual specificity subfamily. Interacts with MAPK1/ERK2. Ubiquitinated by the SCF(FBXO31) complex, leading to its proteasomal degradation.

It localises to the cytoplasm. It carries out the reaction O-phospho-L-tyrosyl-[protein] + H2O = L-tyrosyl-[protein] + phosphate. The catalysed reaction is O-phospho-L-seryl-[protein] + H2O = L-seryl-[protein] + phosphate. The enzyme catalyses O-phospho-L-threonyl-[protein] + H2O = L-threonyl-[protein] + phosphate. In terms of biological role, dual specificity protein phosphatase, which mediates dephosphorylation and inactivation of MAP kinases. Has a specificity for the ERK family. Plays an important role in alleviating acute postoperative pain. Necessary for the normal dephosphorylation of the long-lasting phosphorylated forms of spinal MAPK1/3 and MAP kinase p38 induced by peripheral surgery, which drives the resolution of acute postoperative allodynia. Also important for dephosphorylation of MAPK1/3 in local wound tissue, which further contributes to resolution of acute pain. The protein is Dual specificity protein phosphatase 6 (Dusp6) of Mus musculus (Mouse).